The primary structure comprises 189 residues: Glycerol-3-phosphate acyltransferase (189 aa).

5 helical membrane passes run 1–21 (MFWL…AILL), 51–71 (LAIL…LIAS), 77–97 (LQDQ…PLYF), 111–131 (MLLG…LLTF), and 151–171 (LLAW…LLIV).

The protein belongs to the PlsY family. In terms of assembly, probably interacts with PlsX.

It is found in the cell inner membrane. The enzyme catalyses an acyl phosphate + sn-glycerol 3-phosphate = a 1-acyl-sn-glycero-3-phosphate + phosphate. The protein operates within lipid metabolism; phospholipid metabolism. Its function is as follows. Catalyzes the transfer of an acyl group from acyl-phosphate (acyl-PO(4)) to glycerol-3-phosphate (G3P) to form lysophosphatidic acid (LPA). This enzyme utilizes acyl-phosphate as fatty acyl donor, but not acyl-CoA or acyl-ACP. In Pseudomonas fluorescens (strain Pf0-1), this protein is Glycerol-3-phosphate acyltransferase.